The chain runs to 259 residues: Dihydroorotate dehydrogenase B (NAD(+)), electron transfer subunit (259 aa).

An FAD-binding FR-type domain is found at 2–102; it reads MQKQNMIVVN…LGPLGHGFPV (101 aa). FAD is bound by residues 53–56, 70–72, and 77–78; these read RPIS, LYR, and GT. [2Fe-2S] cluster-binding residues include C221, C226, C229, and C246.

The protein belongs to the PyrK family. Heterotetramer of 2 PyrK and 2 PyrD type B subunits. It depends on [2Fe-2S] cluster as a cofactor. FAD is required as a cofactor.

It functions in the pathway pyrimidine metabolism; UMP biosynthesis via de novo pathway; orotate from (S)-dihydroorotate (NAD(+) route): step 1/1. Responsible for channeling the electrons from the oxidation of dihydroorotate from the FMN redox center in the PyrD type B subunit to the ultimate electron acceptor NAD(+). In Bacillus mycoides (strain KBAB4) (Bacillus weihenstephanensis), this protein is Dihydroorotate dehydrogenase B (NAD(+)), electron transfer subunit.